A 1096-amino-acid polypeptide reads, in one-letter code: Lysine-specific demethylase 4B (1096 aa).

A JmjN domain is found at 15-57 (IMTFRPTMEEFKDFNKYVAYIESQGAHRAGLAKIIPPKEWKPR). Residue tyrosine 133 coordinates 2-oxoglutarate. The 164-residue stretch at 146–309 (VAQWNIGSLR…YGKVATQCTC (164 aa)) folds into the JmjC domain. Positions 189 and 191 each coordinate Fe cation. Residues asparagine 199 and lysine 207 each coordinate 2-oxoglutarate. Zn(2+)-binding residues include cysteine 235 and histidine 241. Lysine 242 serves as a coordination point for 2-oxoglutarate. Histidine 277 contacts Fe cation. Residues cysteine 307 and cysteine 309 each contribute to the Zn(2+) site. The span at 369–382 (LLRRSHRKRSQPKK) shows a compositional bias: basic residues. 2 disordered regions span residues 369-478 (LLRR…SEEA) and 557-649 (KGPT…VSDP). Positions 391–406 (PGEGTAGAALLEEAGG) are enriched in low complexity. A compositionally biased stretch (acidic residues) spans 413–425 (GPEVDPEEEEEEP). Basic and acidic residues predominate over residues 430–443 (HGREAEGAEEDGRG). The span at 444 to 458 (KLRPTKAKSERKKKS) shows a compositional bias: basic residues. Serine 566 is subject to Phosphoserine. Lysine 602 carries the N6-acetyllysine modification. The span at 632 to 648 (SSDEEASPFSGEEDVSD) shows a compositional bias: acidic residues. The segment at 731–789 (MCFTSGGENTEPLPANSYIGDDGTSPLIACGKCCLQVHASCYGIRPELVNEGWTCSRCA) adopts a PHD-type 1 zinc-finger fold. A C2HC pre-PHD-type zinc finger spans residues 794-827 (TAECCLCNLRGGALQMTTDRRWIHVICAIAVPEA). The PHD-type 2 zinc-finger motif lies at 850-907 (LKCVYCRKRMKKVSGACIQCSYEHCSTSFHVTCAHAAGVLMEPDDWPYVVSITCLKHK). Tudor domains lie at 917–974 (RAVS…CVQL) and 975–1031 (GPPS…EELP). The segment at 1037–1073 (RLSLSTGAPQEPAFSGEEAKAAKRPRVGTPLATEDSG) is disordered. The residue at position 1065 (threonine 1065) is a Phosphothreonine.

It belongs to the JHDM3 histone demethylase family. The cofactor is Fe(2+).

It localises to the nucleus. It catalyses the reaction N(6),N(6),N(6)-trimethyl-L-lysyl(9)-[histone H3] + 2 2-oxoglutarate + 2 O2 = N(6)-methyl-L-lysyl(9)-[histone H3] + 2 formaldehyde + 2 succinate + 2 CO2. Its function is as follows. Histone demethylase that specifically demethylates 'Lys-9' of histone H3, thereby playing a role in histone code. Does not demethylate histone H3 'Lys-4', H3 'Lys-27', H3 'Lys-36' nor H4 'Lys-20'. Only able to demethylate trimethylated H3 'Lys-9', with a weaker activity than KDM4A, KDM4C and KDM4D. Demethylation of Lys residue generates formaldehyde and succinate. Plays a critical role in the development of the central nervous system (CNS). The chain is Lysine-specific demethylase 4B (KDM4B) from Homo sapiens (Human).